The following is a 275-amino-acid chain: Adenylate kinase (275 aa).

54-59 (GAGKGT) is a binding site for ATP. Residues 74-103 (ATGDMLRSQVAKKTPLGREAKKIMDQGGLV) are NMP. AMP contacts are provided by residues Thr-75, Arg-80, 101-103 (GLV), 130-133 (GFPR), and Gln-137. An LID region spans residues 171–208 (GRLVHPASGRSYHRVFNPPKAEMKDDITGEPLVSRSDD). ATP-binding positions include Arg-172 and 181-182 (SY). 2 residues coordinate AMP: Arg-205 and Arg-216. ATP is bound at residue Gln-244.

It belongs to the adenylate kinase family. AK2 subfamily. In terms of assembly, monomer.

It localises to the cytoplasm. The protein resides in the cytosol. It is found in the mitochondrion intermembrane space. It carries out the reaction AMP + ATP = 2 ADP. Functionally, catalyzes the reversible transfer of the terminal phosphate group between ATP and AMP. Plays an important role in cellular energy homeostasis and in adenine nucleotide metabolism. Adenylate kinase activity is critical for regulation of the phosphate utilization and the AMP de novo biosynthesis pathways. This Sclerotinia sclerotiorum (strain ATCC 18683 / 1980 / Ss-1) (White mold) protein is Adenylate kinase (adk1).